Consider the following 377-residue polypeptide: Transcription factor EC (377 aa).

A bHLH domain is found at 169 to 222 (QKKDNHNLIERRRRYNINYRIKELGTLIPKSNDPDMRWNKGTILKASVEYIKWL). A disordered region spans residues 349–377 (DPLLSSTSPAASKESSRRSSFSTDDGDDL). Positions 353–370 (SSTSPAASKESSRRSSFS) are enriched in low complexity.

It belongs to the MiT/TFE family.

The protein localises to the nucleus. Transcriptional regulator that acts as a repressor or an activator. Binds DNA. This is Transcription factor EC (TFEC) from Gallus gallus (Chicken).